We begin with the raw amino-acid sequence, 611 residues long: Inhibitor of apoptosis protein (611 aa).

BIR repeat units lie at residues 30 to 97 (ELYR…CSFV), 176 to 242 (EEAR…CPFV), and 262 to 329 (HEAR…CEYL). Cys-299, Cys-302, His-319, and Cys-326 together coordinate Zn(2+). The 91-residue stretch at 446-536 (VASDDLSLIR…VLYKDLFVEK (91 aa)) folds into the CARD domain. Residues 564–599 (CKVCMDKEVSIVFIPCGHLVVCKECAPSLRKCPICR) form an RING-type zinc finger.

The protein belongs to the IAP family. In terms of tissue distribution, cells of the T-lymphocyte lineage. Found in both cortical and medullary cells of the thymus. Expressed at relatively high levels also in spleen, bursa, intestine and lung and at very low levels in testis, brain and skeletal muscle.

The protein localises to the nucleus. It localises to the cytoplasm. Apoptotic suppressor. The sequence is that of Inhibitor of apoptosis protein (ITA) from Gallus gallus (Chicken).